The primary structure comprises 131 residues: D-ribose pyranase (131 aa).

Histidine 20 functions as the Proton donor in the catalytic mechanism. Substrate contacts are provided by residues aspartate 28, histidine 98, and 120 to 122 (YSN).

It belongs to the RbsD / FucU family. RbsD subfamily. Homodecamer.

Its subcellular location is the cytoplasm. The catalysed reaction is beta-D-ribopyranose = beta-D-ribofuranose. It functions in the pathway carbohydrate metabolism; D-ribose degradation; D-ribose 5-phosphate from beta-D-ribopyranose: step 1/2. Its function is as follows. Catalyzes the interconversion of beta-pyran and beta-furan forms of D-ribose. This Latilactobacillus sakei subsp. sakei (strain 23K) (Lactobacillus sakei subsp. sakei) protein is D-ribose pyranase.